The chain runs to 706 residues: Triadin (706 aa).

Positions M1–P28 are disordered. The Cytoplasmic segment spans residues M1–P47. Over residues G8–V24 the composition is skewed to polar residues. Residues A48–F68 traverse the membrane as a helical segment. The Lumenal segment spans residues D69 to Q706. The N-linked (GlcNAc...) asparagine glycan is linked to N75. Positions D117–E127 are enriched in acidic residues. Disordered regions lie at residues D117–D265, D281–K663, and F684–Q706. Composition is skewed to basic and acidic residues over residues D128–E254, P309–D358, T372–V432, A443–P518, I525–L552, K570–K588, and E599–H621. Residue N625 is glycosylated (N-linked (GlcNAc...) asparagine). The span at K628–E651 shows a compositional bias: basic and acidic residues.

Interacts with CASQ2. Homooligomer of variable subunit number; disulfide-linked. Interacts with CASQ1 and RYR1 in skeletal muscle. Phosphorylated by CaMK2. Post-translationally, N-glycosylated. As to expression, detected in skeletal muscle and in heart (at protein level). Detected in skeletal muscle and in heart.

It localises to the sarcoplasmic reticulum membrane. Functionally, contributes to the regulation of lumenal Ca2+ release via the sarcoplasmic reticulum calcium release channels RYR1 and RYR2, a key step in triggering skeletal and heart muscle contraction. Required for normal organization of the triad junction, where T-tubules and the sarcoplasmic reticulum terminal cisternae are in close contact. Required for normal skeletal muscle strength. Plays a role in excitation-contraction coupling in the heart and in regulating the rate of heart beats. In Oryctolagus cuniculus (Rabbit), this protein is Triadin (TRDN).